A 252-amino-acid chain; its full sequence is Hsp70-Hsp90 organising protein (252 aa).

TPR repeat units lie at residues 7-40 (AQRL…DPLD), 41-74 (HVLY…KKDW), and 75-108 (PKGY…DPNN). Residues 197–239 (EGNDAEERQRQQREEEERRKKKEEEERKKKEEEEMKKQNRTPE) adopt a coiled-coil conformation. Positions 199–252 (NDAEERQRQQREEEERRKKKEEEERKKKEEEEMKKQNRTPEQIQGDEHKLKVMN) are disordered. 2 stretches are compositionally biased toward basic and acidic residues: residues 201–233 (AEER…EMKK) and 243–252 (GDEHKLKVMN).

Monomer. Homodimer. Forms a complex composed of HOP and chaperones HSP70 and HSP90; the interaction is stronger in the absence of ATP. Interacts (via TPR 1, 2, 3, 7, 8 and 9 repeats) with HSP70 (via C-terminus); the interaction is direct and is stronger in the absence of ATP. Interacts (via TPR 4, 5 and 6 repeats) with HSP90 (via C-terminus); the interaction is direct.

The protein localises to the cytoplasm. Acts as a co-chaperone and mediates the association of the chaperones HSP70 and HSP90 probably facilitating substrate transfer from HSP70 to HSP90. Stimulates HSP70 ATPase activity and, in contrast, inhibits HSP90 ATPase activity. The protein is Hsp70-Hsp90 organising protein of Plasmodium falciparum.